The primary structure comprises 113 residues: N(2)-fixation sustaining protein CowN (113 aa).

This sequence belongs to the CowN family.

In terms of biological role, is required to sustain N(2)-dependent growth in the presence of low levels of carbon monoxide (CO). Probably acts by protecting the N(2) fixation ability of the nitrogenase complex, which is inactivated in the presence of CO. The chain is N(2)-fixation sustaining protein CowN from Azoarcus sp. (strain BH72).